The sequence spans 186 residues: Protein GrpE (186 aa).

A compositionally biased stretch (basic and acidic residues) spans 1–17 (MKDEHNQEHDLSQKELE). The disordered stretch occupies residues 1-32 (MKDEHNQEHDLSQKELESCENSCTCEGKKQEA).

The protein belongs to the GrpE family. In terms of assembly, homodimer.

Its subcellular location is the cytoplasm. Participates actively in the response to hyperosmotic and heat shock by preventing the aggregation of stress-denatured proteins, in association with DnaK and GrpE. It is the nucleotide exchange factor for DnaK and may function as a thermosensor. Unfolded proteins bind initially to DnaJ; upon interaction with the DnaJ-bound protein, DnaK hydrolyzes its bound ATP, resulting in the formation of a stable complex. GrpE releases ADP from DnaK; ATP binding to DnaK triggers the release of the substrate protein, thus completing the reaction cycle. Several rounds of ATP-dependent interactions between DnaJ, DnaK and GrpE are required for fully efficient folding. The polypeptide is Protein GrpE (Helicobacter acinonychis (strain Sheeba)).